The chain runs to 391 residues: Tryptophan synthase beta chain 2 (391 aa).

Lys83 is modified (N6-(pyridoxal phosphate)lysine).

Belongs to the TrpB family. As to quaternary structure, tetramer of two alpha and two beta chains. It depends on pyridoxal 5'-phosphate as a cofactor.

The catalysed reaction is (1S,2R)-1-C-(indol-3-yl)glycerol 3-phosphate + L-serine = D-glyceraldehyde 3-phosphate + L-tryptophan + H2O. It participates in amino-acid biosynthesis; L-tryptophan biosynthesis; L-tryptophan from chorismate: step 5/5. In terms of biological role, the beta subunit is responsible for the synthesis of L-tryptophan from indole and L-serine. This Chlamydia caviae (strain ATCC VR-813 / DSM 19441 / 03DC25 / GPIC) (Chlamydophila caviae) protein is Tryptophan synthase beta chain 2 (trpB2).